The sequence spans 660 residues: Acetyl-coenzyme A synthetase (660 aa).

Residues 197-200 (RGGK) and Thr317 each bind CoA. ATP is bound by residues 397-399 (GEP), 421-426 (DTFWQT), Asp512, and Arg528. Ser536 lines the CoA pocket. Position 539 (Arg539) interacts with ATP. Positions 550 and 555 each coordinate Mg(2+). Lys625 carries the N6-acetyllysine modification.

It belongs to the ATP-dependent AMP-binding enzyme family. Mg(2+) serves as cofactor. Acetylated. Deacetylation by the SIR2-homolog deacetylase activates the enzyme.

The enzyme catalyses acetate + ATP + CoA = acetyl-CoA + AMP + diphosphate. Catalyzes the conversion of acetate into acetyl-CoA (AcCoA), an essential intermediate at the junction of anabolic and catabolic pathways. AcsA undergoes a two-step reaction. In the first half reaction, AcsA combines acetate with ATP to form acetyl-adenylate (AcAMP) intermediate. In the second half reaction, it can then transfer the acetyl group from AcAMP to the sulfhydryl group of CoA, forming the product AcCoA. This is Acetyl-coenzyme A synthetase from Cupriavidus metallidurans (strain ATCC 43123 / DSM 2839 / NBRC 102507 / CH34) (Ralstonia metallidurans).